The primary structure comprises 957 residues: Valine--tRNA ligase (957 aa).

Positions Pro-47–His-57 match the 'HIGH' region motif. Residues Lys-558–Ser-562 carry the 'KMSKS' region motif. Lys-561 contacts ATP. Residues Phe-889–Asp-918 adopt a coiled-coil conformation.

Belongs to the class-I aminoacyl-tRNA synthetase family. ValS type 1 subfamily. Monomer.

The protein localises to the cytoplasm. The enzyme catalyses tRNA(Val) + L-valine + ATP = L-valyl-tRNA(Val) + AMP + diphosphate. In terms of biological role, catalyzes the attachment of valine to tRNA(Val). As ValRS can inadvertently accommodate and process structurally similar amino acids such as threonine, to avoid such errors, it has a 'posttransfer' editing activity that hydrolyzes mischarged Thr-tRNA(Val) in a tRNA-dependent manner. The sequence is that of Valine--tRNA ligase from Blochmanniella pennsylvanica (strain BPEN).